Reading from the N-terminus, the 452-residue chain is MMCGLEIHVQLNTNSKLFCSCPTNYQSAPNNTNICPVCLNQPGAKPYPPNQAALDNAIKVALMLGCEISNEVIYFMRKHYDYPDLSSGYQRTSVPVGIKGELNGVRIHEIHVEEDPGQYKPDRGTVDFNRSGIPLIEIVTEPDMKSPEEARNFLNELIRVLNYSGSARGEGTMRADVNISIEGGKRAEVKNVNSIRGAYKVLKFELIRQKNILRRGGEVQQETRAYLESQMITVPMRLKEDADDYRYIPDPDLPPLKIDPAHVEEIRQNMPEPAHLKTERFVEEYGIDKKDAKVLTSELELADAFEEVCKEVDANVAARLMRDELKRVLHYNKIQYAESKITPSDIVELINLIESKQVTPEAAHKLIEQMPGNDKTPTEIGNEMDIIGVVEDDAIVNAINQAIEENPNAVEDYKNGKDNAVNFLVGQVMRLTRGKANAGETNKMIKEKLDQL.

The protein belongs to the GatB/GatE family. GatB subfamily. In terms of assembly, heterotrimer of A, B and C subunits.

It carries out the reaction L-glutamyl-tRNA(Gln) + L-glutamine + ATP + H2O = L-glutaminyl-tRNA(Gln) + L-glutamate + ADP + phosphate + H(+). It catalyses the reaction L-aspartyl-tRNA(Asn) + L-glutamine + ATP + H2O = L-asparaginyl-tRNA(Asn) + L-glutamate + ADP + phosphate + 2 H(+). Allows the formation of correctly charged Asn-tRNA(Asn) or Gln-tRNA(Gln) through the transamidation of misacylated Asp-tRNA(Asn) or Glu-tRNA(Gln) in organisms which lack either or both of asparaginyl-tRNA or glutaminyl-tRNA synthetases. The reaction takes place in the presence of glutamine and ATP through an activated phospho-Asp-tRNA(Asn) or phospho-Glu-tRNA(Gln). The sequence is that of Aspartyl/glutamyl-tRNA(Asn/Gln) amidotransferase subunit B from Methanosphaera stadtmanae (strain ATCC 43021 / DSM 3091 / JCM 11832 / MCB-3).